The following is a 500-amino-acid chain: Cytochrome P450 monooxygenase hepD (500 aa).

A helical transmembrane segment spans residues 15 to 35 (WILLSLSLAFIVVYSLFYLAV). N-linked (GlcNAc...) asparagine glycans are attached at residues Asn99, Asn185, Asn373, and Asn409. A heme-binding site is contributed by Cys445. N-linked (GlcNAc...) asparagine glycosylation occurs at Asn482.

Belongs to the cytochrome P450 family. Heme is required as a cofactor.

It localises to the membrane. It participates in secondary metabolite biosynthesis. Cytochrome P450 monooxygenase; part of the gene cluster that mediates the biosynthesis of heptelidic acid (HA), a sesquiterpene lactone that acts as an inhibitor of glyceraldehyde-3-phosphatedehydrogenase (GAPDH) and a growth inhibitor of the salt-tolerant lactic acid bacteria in soy sauce brewing. The polypeptide is Cytochrome P450 monooxygenase hepD (Aspergillus oryzae (strain ATCC 42149 / RIB 40) (Yellow koji mold)).